A 201-amino-acid polypeptide reads, in one-letter code: NADH-quinone oxidoreductase subunit C (201 aa).

It belongs to the complex I 30 kDa subunit family. In terms of assembly, NDH-1 is composed of 14 different subunits. Subunits NuoB, C, D, E, F, and G constitute the peripheral sector of the complex.

It is found in the cell inner membrane. The enzyme catalyses a quinone + NADH + 5 H(+)(in) = a quinol + NAD(+) + 4 H(+)(out). NDH-1 shuttles electrons from NADH, via FMN and iron-sulfur (Fe-S) centers, to quinones in the respiratory chain. The immediate electron acceptor for the enzyme in this species is believed to be ubiquinone. Couples the redox reaction to proton translocation (for every two electrons transferred, four hydrogen ions are translocated across the cytoplasmic membrane), and thus conserves the redox energy in a proton gradient. The sequence is that of NADH-quinone oxidoreductase subunit C from Sinorhizobium medicae (strain WSM419) (Ensifer medicae).